The sequence spans 316 residues: Endochitinase WIN8 (316 aa).

Positions 1–23 (MRFWALTVLSLLLSLLLGVSSDT) are cleaved as a signal peptide. The Chitin-binding type-1 domain occupies 24–64 (AQCGSQAGNATCPNDLCCSSGGYCGLTVAYCCAGCVSQCRN). 7 disulfides stabilise this stretch: Cys26–Cys41, Cys35–Cys47, Cys40–Cys54, Cys58–Cys62, Cys84–Cys146, Cys158–Cys168, and Cys266–Cys298. Glu128 functions as the Proton donor in the catalytic mechanism.

It belongs to the glycosyl hydrolase 19 family. Chitinase class I subfamily.

The enzyme catalyses Random endo-hydrolysis of N-acetyl-beta-D-glucosaminide (1-&gt;4)-beta-linkages in chitin and chitodextrins.. Functionally, defense against chitin-containing fungal pathogens. This is Endochitinase WIN8 (WIN8) from Populus trichocarpa (Western balsam poplar).